A 131-amino-acid chain; its full sequence is Leptin receptor overlapping transcript-like 1 (131 aa).

4 consecutive transmembrane segments (helical) span residues 7–27, 32–52, 69–89, and 100–120; these read LISL…GCAL, QYWP…YCIA, LAIF…VVFA, and ALVL…FLVF.

The protein belongs to the OB-RGRP/VPS55 family. As to quaternary structure, interacts with RAB13.

It localises to the membrane. Its function is as follows. Negatively regulates growth hormone (GH) receptor cell surface expression in liver. May play a role in liver resistance to GH during periods of reduced nutrient availability. This chain is Leptin receptor overlapping transcript-like 1 (Leprotl1), found in Mus musculus (Mouse).